The chain runs to 255 residues: Small ribosomal subunit protein eS1 (255 aa).

Residue A2 is modified to N-acetylalanine; partial.

It belongs to the eukaryotic ribosomal protein eS1 family. In terms of assembly, component of the small ribosomal subunit. Mature ribosomes consist of a small (40S) and a large (60S) subunit. The 40S subunit contains about 33 different proteins and 1 molecule of RNA (18S). The 60S subunit contains about 49 different proteins and 3 molecules of RNA (25S, 5.8S and 5S).

It localises to the cytoplasm. This Yarrowia lipolytica (strain CLIB 122 / E 150) (Yeast) protein is Small ribosomal subunit protein eS1.